A 192-amino-acid polypeptide reads, in one-letter code: MKGLRKLLLVLGVMLLATGVALAAGGEAASGEHHYDWTNLGFRLANFAIFIAIIYYAAGKKLIAFFGGRRKGIEQELNDLETRKTDAKKQLGDVEKRIADLENERKAIIAEYQAQGEALKAAIISKAETSARQIVEQAKKSAENEVKYAKDAMREELADMIVDATEKLLKERLDGKEQEKLIDKYLTKVVLN.

A helical transmembrane segment spans residues 7–27 (LLLVLGVMLLATGVALAAGGE).

Belongs to the ATPase B chain family. F-type ATPases have 2 components, F(1) - the catalytic core - and F(0) - the membrane proton channel. F(1) has five subunits: alpha(3), beta(3), gamma(1), delta(1), epsilon(1). F(0) has three main subunits: a(1), b(2) and c(10-14). The alpha and beta chains form an alternating ring which encloses part of the gamma chain. F(1) is attached to F(0) by a central stalk formed by the gamma and epsilon chains, while a peripheral stalk is formed by the delta and b chains.

It is found in the cell inner membrane. F(1)F(0) ATP synthase produces ATP from ADP in the presence of a proton or sodium gradient. F-type ATPases consist of two structural domains, F(1) containing the extramembraneous catalytic core and F(0) containing the membrane proton channel, linked together by a central stalk and a peripheral stalk. During catalysis, ATP synthesis in the catalytic domain of F(1) is coupled via a rotary mechanism of the central stalk subunits to proton translocation. Functionally, component of the F(0) channel, it forms part of the peripheral stalk, linking F(1) to F(0). The polypeptide is ATP synthase subunit b (Oleidesulfovibrio alaskensis (strain ATCC BAA-1058 / DSM 17464 / G20) (Desulfovibrio alaskensis)).